A 197-amino-acid chain; its full sequence is Pyridoxal 5'-phosphate synthase subunit PdxT (197 aa).

Position 52–54 (glycine 52–serine 54) interacts with L-glutamine. Cysteine 84 functions as the Nucleophile in the catalytic mechanism. L-glutamine-binding positions include arginine 111 and isoleucine 139 to arginine 140. Active-site charge relay system residues include histidine 175 and glutamate 177.

It belongs to the glutaminase PdxT/SNO family. In terms of assembly, in the presence of PdxS, forms a dodecamer of heterodimers. Only shows activity in the heterodimer.

It catalyses the reaction aldehydo-D-ribose 5-phosphate + D-glyceraldehyde 3-phosphate + L-glutamine = pyridoxal 5'-phosphate + L-glutamate + phosphate + 3 H2O + H(+). The enzyme catalyses L-glutamine + H2O = L-glutamate + NH4(+). It functions in the pathway cofactor biosynthesis; pyridoxal 5'-phosphate biosynthesis. Catalyzes the hydrolysis of glutamine to glutamate and ammonia as part of the biosynthesis of pyridoxal 5'-phosphate. The resulting ammonia molecule is channeled to the active site of PdxS. The sequence is that of Pyridoxal 5'-phosphate synthase subunit PdxT from Halorubrum lacusprofundi (strain ATCC 49239 / DSM 5036 / JCM 8891 / ACAM 34).